Here is a 135-residue protein sequence, read N- to C-terminus: Ribosome-binding factor A (135 aa).

It belongs to the RbfA family. As to quaternary structure, monomer. Binds 30S ribosomal subunits, but not 50S ribosomal subunits or 70S ribosomes.

The protein resides in the cytoplasm. One of several proteins that assist in the late maturation steps of the functional core of the 30S ribosomal subunit. Associates with free 30S ribosomal subunits (but not with 30S subunits that are part of 70S ribosomes or polysomes). Required for efficient processing of 16S rRNA. May interact with the 5'-terminal helix region of 16S rRNA. The sequence is that of Ribosome-binding factor A from Sinorhizobium fredii (strain NBRC 101917 / NGR234).